Here is a 367-residue protein sequence, read N- to C-terminus: Protein RIC-3 (367 aa).

An N-terminal signal peptide occupies residues 1–31 (MAYSTVQRVALASGLVLAVSLLLPKAFLSRG). Residues 30–67 (RGKRPEPPPGPEGKLDRFPPMMHHHSAPSDGQTPGARF) are disordered. Residues 32–95 (KRPEPPPGPE…AGGGGSGRGL (64 aa)) are Lumenal-facing. A helical membrane pass occupies residues 96 to 116 (MGQIIPIYGFGIFLYILYILF). Topologically, residues 117–367 (KLSKGKTAED…LRKRNPQGFE (251 aa)) are cytoplasmic. Residues 138–169 (HRKITNFELVQLQEKLKETEEAMEKLINRVGP) are a coiled coil. The residue at position 201 (Lys-201) is an N6-acetyllysine; alternate. Lys-201 is covalently cross-linked (Glycyl lysine isopeptide (Lys-Gly) (interchain with G-Cter in ubiquitin); alternate). Disordered regions lie at residues 262–301 (QMGE…PESC) and 322–367 (ADGY…QGFE). Over residues 271-280 (SERLSWDHLP) the composition is skewed to basic and acidic residues. The segment covering 358–367 (LRKRNPQGFE) has biased composition (basic residues).

The protein belongs to the ric-3 family. Monomer and homodimer. Interacts with CHRNA7, CHRNA3, CHRNA4, CHRNB2, CHRNB4 and HTR3A. As to expression, expressed in brain, with highest levels in hippocampus, cerebellum and superior colliculus.

It localises to the endoplasmic reticulum membrane. In terms of biological role, molecular chaperone which promotes the proper subunit assembly and surface trafficking of alpha-7 (CHRNA7) nicotinic acetylcholine receptor. Promotes the proper subunit assembly and cell surface expression of alpha-8 (CHRNA8) nicotinic acetylcholine receptor. May also promote functional expression of homomeric serotoninergic 5-HT3 receptors, and of heteromeric acetylcholine receptors alpha-3/beta-2, alpha-3/beta-4, alpha-4/beta-2 and alpha-4/beta-4. The polypeptide is Protein RIC-3 (Ric3) (Mus musculus (Mouse)).